The following is a 62-amino-acid chain: Small acidic protein 1 (62 aa).

Interacts with the COP9 signalosome. As to expression, expressed in roots, flowers, siliques, stems, leaves and seeds. In flowers, detected in petals, anthers and pistils.

Mediates responses to the synthetic auxin 2,4-dichlorophenoxyacetic acid (2,4-D). Not involved in the response to indole-3-acetic acid (IAA). Interacts with RUB modification-related components and may regulate the cullin-ring ubiquitin E3 ligase complex (CRL) activity. This chain is Small acidic protein 1 (SMAP1), found in Arabidopsis thaliana (Mouse-ear cress).